We begin with the raw amino-acid sequence, 158 residues long: Pycsar effector protein SaPycTM (158 aa).

The next 3 membrane-spanning stretches (helical) occupy residues 20–40 (FADA…NFNF), 53–73 (IFNF…AFAV), and 136–156 (VFII…FQII).

Its subcellular location is the cell membrane. Functionally, pycsar (pyrimidine cyclase system for antiphage resistance) provides immunity against bacteriophage. The pyrimidine cyclase (PycC) synthesizes cyclic nucleotides in response to infection; these serve as specific second messenger signals. The signals activate the adjacent effector, leading to bacterial cell death and abortive phage infection. A clade E Pycsar system. The effector gene of a two-gene Pycsar system. Expression of this and adjacent SaPycC cytidylate cyclase (AC P0DV38) probably confers resistance to bacteriophage. The genes are probably only expressed in response to bacteriophage infection. Probably only responds to cCMP (produced by its cognate NTP cyclase), acts by impairing membrane integrity. The sequence is that of Pycsar effector protein SaPycTM from Staphylococcus aureus.